A 366-amino-acid polypeptide reads, in one-letter code: Beta sliding clamp (366 aa).

Belongs to the beta sliding clamp family. In terms of assembly, forms a ring-shaped head-to-tail homodimer around DNA which binds and tethers DNA polymerases and other proteins to the DNA. The DNA replisome complex has a single clamp-loading complex (3 tau and 1 each of delta, delta', psi and chi subunits) which binds 3 Pol III cores (1 core on the leading strand and 2 on the lagging strand) each with a beta sliding clamp dimer. Additional proteins in the replisome are other copies of gamma, psi and chi, Ssb, DNA helicase and RNA primase.

It is found in the cytoplasm. Confers DNA tethering and processivity to DNA polymerases and other proteins. Acts as a clamp, forming a ring around DNA (a reaction catalyzed by the clamp-loading complex) which diffuses in an ATP-independent manner freely and bidirectionally along dsDNA. Initially characterized for its ability to contact the catalytic subunit of DNA polymerase III (Pol III), a complex, multichain enzyme responsible for most of the replicative synthesis in bacteria; Pol III exhibits 3'-5' exonuclease proofreading activity. The beta chain is required for initiation of replication as well as for processivity of DNA replication. This is Beta sliding clamp (dnaN) from Buchnera aphidicola subsp. Rhopalosiphum padi.